A 250-amino-acid chain; its full sequence is 3-deoxy-manno-octulosonate cytidylyltransferase (250 aa).

This sequence belongs to the KdsB family.

It localises to the cytoplasm. The catalysed reaction is 3-deoxy-alpha-D-manno-oct-2-ulosonate + CTP = CMP-3-deoxy-beta-D-manno-octulosonate + diphosphate. It participates in nucleotide-sugar biosynthesis; CMP-3-deoxy-D-manno-octulosonate biosynthesis; CMP-3-deoxy-D-manno-octulosonate from 3-deoxy-D-manno-octulosonate and CTP: step 1/1. Its pathway is bacterial outer membrane biogenesis; lipopolysaccharide biosynthesis. Functionally, activates KDO (a required 8-carbon sugar) for incorporation into bacterial lipopolysaccharide in Gram-negative bacteria. In Legionella pneumophila subsp. pneumophila (strain Philadelphia 1 / ATCC 33152 / DSM 7513), this protein is 3-deoxy-manno-octulosonate cytidylyltransferase.